A 1451-amino-acid polypeptide reads, in one-letter code: Protein clueless (1451 aa).

2 disordered regions span residues 1 to 101 (MALE…EYAA) and 264 to 286 (KKTR…VSEP). The span at 9–53 (NSNATATGDATATKASSKAKENNNTAGGKKNLNPIPSQQNSNQNL) shows a compositional bias: low complexity. The segment covering 66 to 75 (GKKKGKKNRN) has biased composition (basic residues). Ser270 bears the Phosphoserine mark. Residues 424 to 666 (RAEDAFSSKL…RTFPPDVNFL (243 aa)) enclose the Clu domain. Disordered stretches follow at residues 722–775 (AKKQ…ESKT), 961–1012 (AVSS…SSVS), and 1413–1451 (ANNN…ATSS). A compositionally biased stretch (basic and acidic residues) spans 748–758 (GADKTDVKEEK). Over residues 969–984 (KKRGNGGKHNKHKSSK) the composition is skewed to basic residues. Low complexity predominate over residues 989 to 1010 (QQQQQTTGNQNGSSSGTSNGSS).

The protein belongs to the CLU family.

The protein resides in the cytoplasm. Its function is as follows. mRNA-binding protein involved in proper cytoplasmic distribution of mitochondria. This Drosophila yakuba (Fruit fly) protein is Protein clueless.